The following is a 217-amino-acid chain: Probable transaldolase (217 aa).

The active-site Schiff-base intermediate with substrate is the Lys83.

The protein belongs to the transaldolase family. Type 3B subfamily.

The protein resides in the cytoplasm. It catalyses the reaction D-sedoheptulose 7-phosphate + D-glyceraldehyde 3-phosphate = D-erythrose 4-phosphate + beta-D-fructose 6-phosphate. Its pathway is carbohydrate degradation; pentose phosphate pathway; D-glyceraldehyde 3-phosphate and beta-D-fructose 6-phosphate from D-ribose 5-phosphate and D-xylulose 5-phosphate (non-oxidative stage): step 2/3. In terms of biological role, transaldolase is important for the balance of metabolites in the pentose-phosphate pathway. The protein is Probable transaldolase of Lactiplantibacillus plantarum (strain ATCC BAA-793 / NCIMB 8826 / WCFS1) (Lactobacillus plantarum).